The sequence spans 356 residues: DNA polymerase IV (356 aa).

One can recognise a UmuC domain in the interval 7-188 (IIHIDMDCFY…LPLKKISGVG (182 aa)). Mg(2+) contacts are provided by Asp11 and Asp106. Glu107 is an active-site residue.

This sequence belongs to the DNA polymerase type-Y family. As to quaternary structure, monomer. The cofactor is Mg(2+).

Its subcellular location is the cytoplasm. It carries out the reaction DNA(n) + a 2'-deoxyribonucleoside 5'-triphosphate = DNA(n+1) + diphosphate. Poorly processive, error-prone DNA polymerase involved in untargeted mutagenesis. Copies undamaged DNA at stalled replication forks, which arise in vivo from mismatched or misaligned primer ends. These misaligned primers can be extended by PolIV. Exhibits no 3'-5' exonuclease (proofreading) activity. May be involved in translesional synthesis, in conjunction with the beta clamp from PolIII. This Glaesserella parasuis serovar 5 (strain SH0165) (Haemophilus parasuis) protein is DNA polymerase IV.